The sequence spans 317 residues: Glutaminase (317 aa).

Substrate contacts are provided by Ser67, Asn118, Glu162, Asn169, Tyr193, Tyr245, and Val263.

The protein belongs to the glutaminase family. In terms of assembly, homotetramer.

The enzyme catalyses L-glutamine + H2O = L-glutamate + NH4(+). The protein is Glutaminase of Brucella abortus (strain S19).